The chain runs to 772 residues: Metabotropic glutamate receptor-like protein G (772 aa).

Residues 1–23 form the signal peptide; that stretch reads MKKIIFLVLFLIFIFKDIKSSYG. At 24-391 the chain is on the extracellular side; that stretch reads VDLVNFKMIT…TQVKFSPSIQ (368 aa). N-linked (GlcNAc...) asparagine glycans are attached at residues Asn-73, Asn-126, Asn-262, Asn-313, Asn-343, and Asn-378. Residues 392–412 form a helical membrane-spanning segment; the sequence is IGVSIVSGVLIAIVLLSMVGV. The Cytoplasmic portion of the chain corresponds to 413–426; that stretch reads YKYRASSSIRSASP. The helical transmembrane segment at 427 to 447 threads the bilayer; sequence IFLIFILFGALIVFGGIILWV. Topologically, residues 448–463 are extracellular; sequence SELNDHVCNGRLWMVT. A helical transmembrane segment spans residues 464-484; it reads LGFSTLIGSLVVKNFRIWLIF. Over 485 to 500 the chain is Cytoplasmic; the sequence is DNPELKTVKITNYQLY. A helical transmembrane segment spans residues 501 to 521; the sequence is PWVACCLVINIILMSILTSLG. The Extracellular portion of the chain corresponds to 522-551; the sequence is DLREVDATGIDSLGKYEFLKICKMNNSGAS. N-linked (GlcNAc...) asparagine glycosylation occurs at Asn-546. A helical transmembrane segment spans residues 552-572; sequence VLYTILAYFGALLLTGVFVSW. The Cytoplasmic portion of the chain corresponds to 573–586; it reads KIRIVDIEEFNESR. Residues 587 to 607 form a helical membrane-spanning segment; it reads AIAHTLYAISFCLFVIVPLMI. At 608-616 the chain is on the extracellular side; that stretch reads SPLEKQSET. A helical transmembrane segment spans residues 617 to 637; the sequence is IILSVAGLFITTAAVLIIFLP. Residues 638–772 lie on the Cytoplasmic side of the membrane; it reads KFYRVYEYGE…QIEPDEKNQD (135 aa). Residues 664–772 are disordered; it reads TARAESHKSS…QIEPDEKNQD (109 aa). Residues 718 to 728 are compositionally biased toward acidic residues; that stretch reads FTEESVSEIDE. Low complexity predominate over residues 740-753; sequence PEINQSEQQNSEIE. Over residues 754–763 the composition is skewed to pro residues; sequence QPPPPPPPQQ.

This sequence in the N-terminal section; belongs to the BMP lipoprotein family. In the C-terminal section; belongs to the G-protein coupled receptor 3 family. GABA-B receptor subfamily.

The protein resides in the membrane. In Dictyostelium discoideum (Social amoeba), this protein is Metabotropic glutamate receptor-like protein G (grlG).